A 309-amino-acid chain; its full sequence is Olfactory receptor 8U1 (309 aa).

Over 1 to 25 (MAHINCTQATEFILVGLTDHQELKM) the chain is Extracellular. N5 carries an N-linked (GlcNAc...) asparagine glycan. A helical transmembrane segment spans residues 26–46 (PLFVLFLSIYLFTVVGNLGLI). The Cytoplasmic segment spans residues 47–54 (LLIRADTS). A helical transmembrane segment spans residues 55–75 (LNTPMYFFLSNLAFVDFCYSS). The Extracellular portion of the chain corresponds to 76 to 99 (VITPKMLGNFLYKQNVISFDACAT). A disulfide bridge links C97 with C189. The helical transmembrane segment at 100 to 120 (QLGCFLTFMISESLLLASMAY) threads the bilayer. Over 121–139 (DRYVAICNPLLYMVVMTPG) the chain is Cytoplasmic. A helical transmembrane segment spans residues 140 to 160 (ICIQLVAVPYSYSFLMALFHT). The Extracellular portion of the chain corresponds to 161-197 (ILTFRLSYCHSNIVNHFYCDDMPLLRLTCSDTRFKQL). The helical transmembrane segment at 198–217 (WIFACAGIMFISSLLIVFVS) threads the bilayer. Residues 218–237 (YMFIISAILRMHSAEGRQKA) are Cytoplasmic-facing. A helical membrane pass occupies residues 238–258 (FSTCGSHMLAVTIFYGTLIFM). The Extracellular segment spans residues 259-271 (YLQPSSSHALDTD). A helical membrane pass occupies residues 272–292 (KMASVFYTVIIPMLNPLIYSL). Residues 293–309 (QNKEVKEALKKIIINKN) lie on the Cytoplasmic side of the membrane.

Belongs to the G-protein coupled receptor 1 family.

It is found in the cell membrane. Odorant receptor. This Homo sapiens (Human) protein is Olfactory receptor 8U1 (OR8U1).